A 354-amino-acid polypeptide reads, in one-letter code: UDP-3-O-acylglucosamine N-acyltransferase (354 aa).

H245 functions as the Proton acceptor in the catalytic mechanism.

It belongs to the transferase hexapeptide repeat family. LpxD subfamily. As to quaternary structure, homotrimer.

The catalysed reaction is a UDP-3-O-[(3R)-3-hydroxyacyl]-alpha-D-glucosamine + a (3R)-hydroxyacyl-[ACP] = a UDP-2-N,3-O-bis[(3R)-3-hydroxyacyl]-alpha-D-glucosamine + holo-[ACP] + H(+). The protein operates within bacterial outer membrane biogenesis; LPS lipid A biosynthesis. Functionally, catalyzes the N-acylation of UDP-3-O-acylglucosamine using 3-hydroxyacyl-ACP as the acyl donor. Is involved in the biosynthesis of lipid A, a phosphorylated glycolipid that anchors the lipopolysaccharide to the outer membrane of the cell. This chain is UDP-3-O-acylglucosamine N-acyltransferase, found in Anaeromyxobacter dehalogenans (strain 2CP-C).